A 355-amino-acid chain; its full sequence is MRWSEFLQHLEAKTGPCTAKAIAGDPELHGVAAINEAQSGQVSFLDQESGLQDWIEQTAASALILPPDPALQARAEARNLPWMTTAQPRLAFAAAIAVFYQPFRPVAGIHPSAVIDPSAQLGDRVSVGAHVVIGANCVIGNDVILHANVVLYPGVSLGDRCQIHANSTIHERSQIGQDCVIHSGAVIGAEGFGFVPTASGWFKMEQSGIVVLEDGVEVGCNSAIDRPAVGETRIGAQTKLDNLVHIGHGCQIGKACAMAAQVGLAGGVEVGDRVILAGQVGVANRVKIGDRAIASSKSGIHGEIEAGAIVSGYPAIPNRQWLKTSAVYNRLPELYRSLRNLIRRVEVLEQDRPSS.

His248 (proton acceptor) is an active-site residue.

Belongs to the transferase hexapeptide repeat family. LpxD subfamily. As to quaternary structure, homotrimer.

It catalyses the reaction a UDP-3-O-[(3R)-3-hydroxyacyl]-alpha-D-glucosamine + a (3R)-hydroxyacyl-[ACP] = a UDP-2-N,3-O-bis[(3R)-3-hydroxyacyl]-alpha-D-glucosamine + holo-[ACP] + H(+). It participates in bacterial outer membrane biogenesis; LPS lipid A biosynthesis. In terms of biological role, catalyzes the N-acylation of UDP-3-O-acylglucosamine using 3-hydroxyacyl-ACP as the acyl donor. Is involved in the biosynthesis of lipid A, a phosphorylated glycolipid that anchors the lipopolysaccharide to the outer membrane of the cell. The polypeptide is UDP-3-O-acylglucosamine N-acyltransferase (Synechococcus elongatus (strain ATCC 33912 / PCC 7942 / FACHB-805) (Anacystis nidulans R2)).